The following is a 458-amino-acid chain: Acetyl-CoA decarbonylase/synthase complex subunit gamma (458 aa).

Residues 1 to 59 enclose the 4Fe-4S domain; sequence MQVTAMDVYRLLPKTNCGKCNEASCMAFATKLIEKEVTLDDCPQLSGDERQKLENLLAP. Residues Cys17, Cys20, Cys25, and Cys42 each coordinate [4Fe-4S] cluster.

As to quaternary structure, heterodimer of delta and gamma chains. The ACDS complex is made up of alpha, epsilon, beta, gamma and delta chains with a probable stoichiometry of (alpha(2)epsilon(2))(4)-beta(8)-(gamma(1)delta(1))(8). It depends on corrinoid as a cofactor. The cofactor is [4Fe-4S] cluster.

The enzyme catalyses 5,6,7,8-tetrahydrosarcinapterin + methyl-Co(III)-[corrinoid Fe-S protein] = 5-methyltetrahydrosarcinapterin + Co(I)-[corrinoid Fe-S protein] + H(+). Its function is as follows. Part of a complex that catalyzes the reversible cleavage of acetyl-CoA, allowing autotrophic growth from CO(2). The protein is Acetyl-CoA decarbonylase/synthase complex subunit gamma of Methanothermobacter thermautotrophicus (strain ATCC 29096 / DSM 1053 / JCM 10044 / NBRC 100330 / Delta H) (Methanobacterium thermoautotrophicum).